The following is a 1427-amino-acid chain: ATP-binding cassette transporter abc1 (1427 aa).

The helical transmembrane segment at 26-46 threads the bilayer; it reads LLLFYLSLFSLTNLFLIQKLF. N49 is a glycosylation site (N-linked (GlcNAc...) asparagine). A run of 9 helical transmembrane segments spans residues 63–83, 87–107, 115–135, 155–175, 197–217, 262–282, 298–318, 345–367, and 397–417; these read CLLEYIQIILSIVSAALSFYL, AVWWAIRTITHLEIVGLNILS, LFSWISVANAFGLLLLRLISI, LLLPLAYNITLFLLVIIPLFF, CSIFSLIFTYGWLNGIIWKSW, ILLMVFLSVLVSSTLFVTPLA, GNSPFLWVFVLLIGPYLASVV, VLTSKTLFVAVDGSKINLDYVYN, and MYFLYQLLGWSAYVGLLLAIL. One can recognise an ABC transmembrane type-1 1 domain in the interval 262 to 549; it reads ILLMVFLSVL…LASVSRQFIQ (288 aa). N-linked (GlcNAc...) asparagine glycosylation occurs at N437. The next 2 helical transmembrane spans lie at 489-509 and 513-533; these read IIFKSGMKIAPFISMFITFAI and IMGHQLTPATAFTSISMFGLL. N567, N581, and N601 each carry an N-linked (GlcNAc...) asparagine glycan. The ABC transporter 1 domain occupies 579 to 807; the sequence is FENTSLSWSP…PSTFFSSNTK (229 aa). Residues 609–629 traverse the membrane as a helical segment; sequence FTLVVGSTGSGKSTLAMALLG. ATP is bound at residue 614-621; it reads GSTGSGKS. N658 and N703 each carry an N-linked (GlcNAc...) asparagine glycan. Residues 760-780 traverse the membrane as a helical segment; it reads IILFTHNVSLCLPIAENVIVL. N-linked (GlcNAc...) asparagine glycosylation is found at N782 and N842. Positions 862-1142 constitute an ABC transmembrane type-1 2 domain; sequence ILGSILLVMM…FVRANNEILT (281 aa). A run of 3 helical transmembrane segments spans residues 866–886, 896–916, and 973–993; these read ILLVMMSQVSLASIHFWIALW, LPSSFSFLWGYAILLFIYFLM, and LLWASLEGMLLCVMAILITML. An N-linked (GlcNAc...) asparagine glycan is attached at N994. Transmembrane regions (helical) follow at residues 995-1015, 1086-1106, and 1114-1134; these read VTLVMPIFMVPAAFVSLLVYL, LAIRTDGISGLVGFSTGLIAL, and GLVGFSLNSAIGFNISVLVFV. N-linked (GlcNAc...) asparagine glycans are attached at residues N1161 and N1184. The ABC transporter 2 domain occupies 1180–1422; that stretch reads VSIKNLTVSY…RRAFWKMCKE (243 aa). 1214-1221 serves as a coordination point for ATP; it reads GRTGSGKS. Residues 1223–1243 form a helical membrane-spanning segment; the sequence is MGLTLLRFTMIMSGAVEVDGI. N1324 carries an N-linked (GlcNAc...) asparagine glycan.

Belongs to the ABC transporter superfamily. ABCC family. Conjugate transporter (TC 3.A.1.208) subfamily.

It is found in the membrane. This is ATP-binding cassette transporter abc1 (abc1) from Schizosaccharomyces pombe (strain 972 / ATCC 24843) (Fission yeast).